The following is a 351-amino-acid chain: Methylthioribose-1-phosphate isomerase (351 aa).

Catalysis depends on Asp244, which acts as the Proton donor.

This sequence belongs to the eIF-2B alpha/beta/delta subunits family. MtnA subfamily.

The protein localises to the cytoplasm. Its subcellular location is the nucleus. It carries out the reaction 5-(methylsulfanyl)-alpha-D-ribose 1-phosphate = 5-(methylsulfanyl)-D-ribulose 1-phosphate. The protein operates within amino-acid biosynthesis; L-methionine biosynthesis via salvage pathway; L-methionine from S-methyl-5-thio-alpha-D-ribose 1-phosphate: step 1/6. Its function is as follows. Catalyzes the interconversion of methylthioribose-1-phosphate (MTR-1-P) into methylthioribulose-1-phosphate (MTRu-1-P). The protein is Methylthioribose-1-phosphate isomerase of Anopheles gambiae (African malaria mosquito).